Here is a 540-residue protein sequence, read N- to C-terminus: Chaperonin GroEL (540 aa).

ATP contacts are provided by residues 29-32 (TIGP), 86-90 (DGTTT), Gly-413, 476-478 (NAA), and Asp-492. The disordered stretch occupies residues 520–540 (DKPEPESNNQMPATPGMGGMM).

The protein belongs to the chaperonin (HSP60) family. As to quaternary structure, forms a cylinder of 14 subunits composed of two heptameric rings stacked back-to-back. Interacts with the co-chaperonin GroES.

It is found in the cytoplasm. The enzyme catalyses ATP + H2O + a folded polypeptide = ADP + phosphate + an unfolded polypeptide.. In terms of biological role, together with its co-chaperonin GroES, plays an essential role in assisting protein folding. The GroEL-GroES system forms a nano-cage that allows encapsulation of the non-native substrate proteins and provides a physical environment optimized to promote and accelerate protein folding. This Ligilactobacillus salivarius (strain UCC118) (Lactobacillus salivarius) protein is Chaperonin GroEL.